Reading from the N-terminus, the 422-residue chain is Tyrosine--tRNA ligase (422 aa).

Residue Y34 coordinates L-tyrosine. Positions 39–48 (PTEDSLHVGH) match the 'HIGH' region motif. Positions 172 and 176 each coordinate L-tyrosine. The 'KMSKS' region motif lies at 232–236 (KFGKT). Residue K235 coordinates ATP. The region spanning 354–412 (KDLQEALVLSSLAQSRTQAKNMIISNSISINTKKIVNKNYIIDDNDKLFNQFTLLSRGK) is the S4 RNA-binding domain.

The protein belongs to the class-I aminoacyl-tRNA synthetase family. TyrS type 1 subfamily. Homodimer.

The protein localises to the cytoplasm. It carries out the reaction tRNA(Tyr) + L-tyrosine + ATP = L-tyrosyl-tRNA(Tyr) + AMP + diphosphate + H(+). Its function is as follows. Catalyzes the attachment of tyrosine to tRNA(Tyr) in a two-step reaction: tyrosine is first activated by ATP to form Tyr-AMP and then transferred to the acceptor end of tRNA(Tyr). The sequence is that of Tyrosine--tRNA ligase from Buchnera aphidicola subsp. Schizaphis graminum (strain Sg).